A 454-amino-acid chain; its full sequence is UDP-N-acetylmuramate--L-alanine ligase (454 aa).

112 to 118 (GTHGKTT) is a binding site for ATP.

The protein belongs to the MurCDEF family.

The protein localises to the cytoplasm. The catalysed reaction is UDP-N-acetyl-alpha-D-muramate + L-alanine + ATP = UDP-N-acetyl-alpha-D-muramoyl-L-alanine + ADP + phosphate + H(+). The protein operates within cell wall biogenesis; peptidoglycan biosynthesis. In terms of biological role, cell wall formation. This is UDP-N-acetylmuramate--L-alanine ligase from Nitratidesulfovibrio vulgaris (strain ATCC 29579 / DSM 644 / CCUG 34227 / NCIMB 8303 / VKM B-1760 / Hildenborough) (Desulfovibrio vulgaris).